A 74-amino-acid polypeptide reads, in one-letter code: Conotoxin VnMEKL-0222 (74 aa).

A signal peptide spans 1-19; it reads MEKLTILLLVAAVLMSTQA. Positions 20 to 46 are excised as a propeptide; that stretch reads LIQEKRPKEKIKFLSKRKSIPESWWEG. Disulfide bonds link C48–C62, C55–C66, and C61–C71.

The protein belongs to the conotoxin O2 superfamily. Expressed by the venom duct.

The protein resides in the secreted. The protein is Conotoxin VnMEKL-0222 of Conus ventricosus (Mediterranean cone).